A 388-amino-acid polypeptide reads, in one-letter code: Processive diacylglycerol beta-glucosyltransferase (388 aa).

The protein belongs to the glycosyltransferase 28 family. UgtP subfamily.

It is found in the cell membrane. It catalyses the reaction a 1,2-diacyl-3-O-(beta-D-glucopyranosyl)-sn-glycerol + UDP-alpha-D-glucose = a 1,2-diacyl-3-O-(beta-D-Glc-(1-&gt;6)-beta-D-Glc)-sn-glycerol + UDP + H(+). The catalysed reaction is a 1,2-diacyl-3-O-(beta-D-Glc-(1-&gt;6)-beta-D-Glc)-sn-glycerol + UDP-alpha-D-glucose = a 1,2-diacyl-3-O-(beta-D-Glc-(1-&gt;6)-beta-D-Glc-(1-&gt;6)-beta-D-Glc)-sn-glycerol + UDP + H(+). The enzyme catalyses a 1,2-diacyl-sn-glycerol + UDP-alpha-D-glucose = a 1,2-diacyl-3-O-(beta-D-glucopyranosyl)-sn-glycerol + UDP + H(+). It functions in the pathway glycolipid metabolism; diglucosyl-diacylglycerol biosynthesis. Its function is as follows. Processive glucosyltransferase involved in the biosynthesis of both the bilayer- and non-bilayer-forming membrane glucolipids. Is able to successively transfer up to three glucosyl residues to diacylglycerol (DAG), thereby catalyzing the formation of beta-monoglucosyl-DAG (3-O-(beta-D-glucopyranosyl)-1,2-diacyl-sn-glycerol), beta-diglucosyl-DAG (3-O-(beta-D-glucopyranosyl-beta-(1-&gt;6)-D-glucopyranosyl)-1,2-diacyl-sn-glycerol) and beta-triglucosyl-DAG (3-O-(beta-D-glucopyranosyl-beta-(1-&gt;6)-D-glucopyranosyl-beta-(1-&gt;6)-D-glucopyranosyl)-1,2-diacyl-sn-glycerol). Beta-diglucosyl-DAG is the predominant glycolipid found in Bacillales and is also used as a membrane anchor for lipoteichoic acid (LTA). The chain is Processive diacylglycerol beta-glucosyltransferase from Bacillus cytotoxicus (strain DSM 22905 / CIP 110041 / 391-98 / NVH 391-98).